An 831-amino-acid chain; its full sequence is Replication restart protein PriA (831 aa).

The Helicase ATP-binding domain occupies 304–471 (VLPLQGYHQV…HRHQNDPQRH (168 aa)). ATP is bound at residue 317–324 (GVTGSGKT). The short motif at 413-416 (DEEH) is the DEAH box element. Positions 537, 540, 546, 549, 568, 571, 581, and 584 each coordinate Zn(2+). One can recognise a Helicase C-terminal domain in the interval 575-735 (EIQPKVCPEC…ELPQREMLNY (161 aa)).

The protein belongs to the helicase family. PriA subfamily. In terms of assembly, component of the replication restart primosome. Zn(2+) serves as cofactor.

The enzyme catalyses Couples ATP hydrolysis with the unwinding of duplex DNA by translocating in the 3'-5' direction.. It carries out the reaction ATP + H2O = ADP + phosphate + H(+). Initiates the restart of stalled replication forks, which reloads the replicative helicase on sites other than the origin of replication. Recognizes and binds to abandoned replication forks and remodels them to uncover a helicase loading site. Promotes assembly of the primosome at these replication forks. The chain is Replication restart protein PriA from Synechocystis sp. (strain ATCC 27184 / PCC 6803 / Kazusa).